A 190-amino-acid chain; its full sequence is Probable chorismate pyruvate-lyase (190 aa).

The substrate site is built by Arg-74, Leu-112, and Glu-173.

The protein belongs to the UbiC family.

The protein localises to the cytoplasm. The catalysed reaction is chorismate = 4-hydroxybenzoate + pyruvate. The protein operates within cofactor biosynthesis; ubiquinone biosynthesis. Removes the pyruvyl group from chorismate, with concomitant aromatization of the ring, to provide 4-hydroxybenzoate (4HB) for the ubiquinone pathway. The polypeptide is Probable chorismate pyruvate-lyase (Bordetella bronchiseptica (strain ATCC BAA-588 / NCTC 13252 / RB50) (Alcaligenes bronchisepticus)).